The chain runs to 189 residues: Potassium-transporting ATPase KdpC subunit (189 aa).

The helical transmembrane segment at 10-30 (ITLVFCVFFSVFYILILWLFA) threads the bilayer.

Belongs to the KdpC family. As to quaternary structure, the system is composed of three essential subunits: KdpA, KdpB and KdpC.

It localises to the cell inner membrane. Its function is as follows. Part of the high-affinity ATP-driven potassium transport (or Kdp) system, which catalyzes the hydrolysis of ATP coupled with the electrogenic transport of potassium into the cytoplasm. This subunit acts as a catalytic chaperone that increases the ATP-binding affinity of the ATP-hydrolyzing subunit KdpB by the formation of a transient KdpB/KdpC/ATP ternary complex. The sequence is that of Potassium-transporting ATPase KdpC subunit from Bacteroides thetaiotaomicron (strain ATCC 29148 / DSM 2079 / JCM 5827 / CCUG 10774 / NCTC 10582 / VPI-5482 / E50).